A 99-amino-acid chain; its full sequence is Small ribosomal subunit protein uS17 (99 aa).

It belongs to the universal ribosomal protein uS17 family. As to quaternary structure, part of the 30S ribosomal subunit.

One of the primary rRNA binding proteins, it binds specifically to the 5'-end of 16S ribosomal RNA. The polypeptide is Small ribosomal subunit protein uS17 (Thermosipho melanesiensis (strain DSM 12029 / CIP 104789 / BI429)).